A 120-amino-acid chain; its full sequence is Large ribosomal subunit protein bL19 (120 aa).

It belongs to the bacterial ribosomal protein bL19 family.

Functionally, this protein is located at the 30S-50S ribosomal subunit interface and may play a role in the structure and function of the aminoacyl-tRNA binding site. The protein is Large ribosomal subunit protein bL19 of Acaryochloris marina (strain MBIC 11017).